The following is a 722-amino-acid chain: Metal transporter cnnm-5 (722 aa).

A signal peptide spans 1–17; that stretch reads MSLFLFAIFQLALGSPG. At 18–139 the chain is on the extracellular side; the sequence is APNGPNVPLQ…AAAAKYMGDE (122 aa). Residues N102 and N114 are each glycosylated (N-linked (GlcNAc...) asparagine). In terms of domain architecture, CNNM transmembrane spans 132–318; it reads AAKYMGDEIV…AQNEREKTIL (187 aa). A helical transmembrane segment spans residues 140-160; sequence IVFCFFCILMSAYASGMTLGY. Over 161–196 the chain is Cytoplasmic; it reads MKFSMIDLNTMLKIAEGDAAKKRVRRIMHFRRRSTQ. Residues 197–217 traverse the membrane as a helical segment; that stretch reads LVVTFSLFSSVFTVLFTTTCE. The Extracellular portion of the chain corresponds to 218 to 227; it reads KMLHGVSNED. A helical transmembrane segment spans residues 228–248; that stretch reads VLKMAVPALICLIFAEMIPQA. At 249–257 the chain is on the cytoplasmic side; that stretch reads VCNSKFGFN. Residues 258 to 278 traverse the membrane as a helical segment; sequence LAASLWFVTVIIFFVTLPIAY. Residues 279 to 722 lie on the Extracellular side of the membrane; it reads PASLVLGRFL…ETTPFMEKQE (444 aa). N320, N349, and N371 each carry an N-linked (GlcNAc...) asparagine glycan. CBS domains lie at 333 to 396 and 413 to 473; these read MVPI…LIDE and TVKF…KIDE. The interval 584-607 is disordered; the sequence is SQRSSSTVNSQQHRQQTTDNSRST. Residue N639 is glycosylated (N-linked (GlcNAc...) asparagine). The tract at residues 686-722 is disordered; it reads LNSRASTSTSTTPACRTPLSVDARSQDETTPFMEKQE. Over residues 688–703 the composition is skewed to low complexity; it reads SRASTSTSTTPACRTP.

Belongs to the ACDP family.

The protein resides in the cell membrane. In terms of biological role, probable metal transporter. Probably acts redundantly with the other metal transport proteins cnnm-1, cnnm-2, cnnm-3 and cnnm-4 to regulate Mg(2+) homeostasis. The polypeptide is Metal transporter cnnm-5 (Caenorhabditis elegans).